A 199-amino-acid chain; its full sequence is Puromycin N-acetyltransferase (199 aa).

One can recognise an N-acetyltransferase domain in the interval 6–198 (PTVRLATRDD…RTWCMTRKPG (193 aa)).

In terms of biological role, detoxification of puromycin. The polypeptide is Puromycin N-acetyltransferase (pac) (Streptomyces alboniger).